Here is a 210-residue protein sequence, read N- to C-terminus: MKGLMGRKVGMTQIFNEDGIVTPVTVIEVAENVVTQIKSDETDGYNSVQVGYGEKKIKNTIKPLQGHFEKAGTTPKRTMKEFRVDSTEGFTAGQELKADLFQAGDKVDVTGISKGKGFQGVIKRHGQSRGPMAHGSRYHRRPGSMGASAYPGRVFKGKNLPGHMGNVQVTAQNLEIVRVDLEKNLLLIKGAVPGPKKGVLVIQTTVKQGK.

A disordered region spans residues 123–144 (KRHGQSRGPMAHGSRYHRRPGS).

This sequence belongs to the universal ribosomal protein uL3 family. In terms of assembly, part of the 50S ribosomal subunit. Forms a cluster with proteins L14 and L19.

One of the primary rRNA binding proteins, it binds directly near the 3'-end of the 23S rRNA, where it nucleates assembly of the 50S subunit. The polypeptide is Large ribosomal subunit protein uL3 (Alkaliphilus metalliredigens (strain QYMF)).